The chain runs to 340 residues: Agmatinase, mitochondrial (340 aa).

Positions 150, 173, 175, 177, 264, and 266 each coordinate Mn(2+).

This sequence belongs to the arginase family. Agmatinase subfamily. It depends on Mn(2+) as a cofactor.

It is found in the mitochondrion. The catalysed reaction is agmatine + H2O = urea + putrescine. Its pathway is amine and polyamine biosynthesis; putrescine biosynthesis via agmatine pathway; putrescine from agmatine: step 1/1. In Gallus gallus (Chicken), this protein is Agmatinase, mitochondrial (AGMAT).